A 1487-amino-acid chain; its full sequence is MASQRSDFAPDLYDFIESNDFGEDPLIRAASAAEEGFTQPAAPDLLYGSQNMFGVDDAPLSTPAVVIPPPSPAPEPRGGKAKRSPSAAGSGGPPTPAAAAQPASPAPSPAPGLAAMLKMVHSSVAPGNGRRATGSSSPGGGDAADPVALDSDTETCPGSPQPEFPSSASPGGGSPAPRVRSISISSSSSSSSSMDEDDQADGAGASSSSSSSSDDSDSDEGGEEETPRPRHSQNAAKTPSAAGSPGPSSGGDRPAAGAATPKSCRSGAASPGAPAPAPASAPAPSRPGGGLLPPGARILEYLEGVREANLAKTLERPEPPAGMASPPGRSPHRLPKDQRPKSALAGASKRKRANPRPIPQTQTQAPAEEAPQTAVWDLLDMNSSQATGAAAAAASAPAAASCAPGVYQREPLLTPSGDPWPGSDPPPMGRVRYGGTGDSRDGLWDDPEIVLAASRYAEAQAPVPVFVPEMGDSTKQYNALVRMVFESREAMSWLQNSKLSGQDQNLAQFCQKFIHAPRGHGSFITGSVANPLPHIGDAMAAGNALWALPHAAASVAMSRRYDRTQKSFILQSLRRAYADMAYPRDEAGRPDSLAAVAGYPAQAAAAAASQQQPEAPAPSVRVREAYTRVCAALGPRRKAAAAAAAPGSRAPRPSAFRLRELGDACVLACQAVFEALLRLRGGASAVPGLDPSEIPSPACPPEALCSNPAGLETAALSLYELRDLVERARLLGDSDPTHRLGSDELRLAVRAVLVVARTVAPLVRYNAEGARARASAWTVTQAVFSIPSLVGGMLGEAVSLLAPPTRSQQPSSSSPGGEPFSGSAAAEGSLQTLPPLWPTVPGKQSATVPSSHSQSPQHSQSGGGAGATTATCCRATQTNARSRGQQHQPQKARSPQAAASPAHLSQEAMPGSSSDDRAIHGRPRGKSGKRRSEPLEPAAQAGASASFSSSARGYDPSGPVDSPPAPKRRVATPGHQAPRALGPMPAEGPDRRGGFRRVPRGDCHTPRPSDAACAAYCPPELVAELIDNQLFPEAWRPALTFDPQALATIAARCSGPPARDGARFGELAASGPLRRRAAWMHQIPDPEDVKVVVLYSPLQDEDLLGGLPASRPGGSRREPLWSDLKGGLSALLAALGNRILTKRSHAWAGNWTGAPDVSALNAQGVLLLSTGDLAFTGCVEYLCLRLGSARRKLLVLDAVSTEDWPQDGPAISQYHIYMRAALTPRVACAVRWPRERHLSRAVLTSSTLFGPGLFARAEAAFARLYPDSAPLRLCRSSNVAYTVDTRAGERTRVPLAPREYRQRVLPDYDGCKDMRAQAEGLGFHDPDFEEGAAQSHRAANRWGLGAWLRPVYLACGRRGAGAVEPSELLIPELLSEFCRVALLEPDAEAEPLVLPITEAPRRRAPRVDWEPGFGSRSTSVLHMGATELCLPEPDDELEIDGAGDVELVVEHPGPSPGVAQALRRAPIKIEVVSDDEDGGDWCNPYLS.

Disordered stretches follow at residues 41–295, 310–370, and 803–1007; these read AAPD…LPPG, LAKT…AEEA, and PPTR…HTPR. Positions 66–75 are enriched in pro residues; it reads VIPPPSPAPE. 2 stretches are compositionally biased toward low complexity: residues 165–193 and 201–213; these read PSSASPGGGSPAPRVRSISISSSSSSSSS and DGAGASSSSSSSS. Acidic residues predominate over residues 214–224; sequence DDSDSDEGGEE. Low complexity predominate over residues 235–272; sequence AAKTPSAAGSPGPSSGGDRPAAGAATPKSCRSGAASPG. The span at 273-285 shows a compositional bias: pro residues; the sequence is APAPAPASAPAPS. Composition is skewed to low complexity over residues 807–829, 849–860, and 867–877; these read SQQPSSSSPGGEPFSGSAAAEGS, PSSHSQSPQHSQ, and ATTATCCRATQ. Over residues 878–893 the composition is skewed to polar residues; sequence TNARSRGQQHQPQKAR. Residues 920-929 are compositionally biased toward basic residues; sequence HGRPRGKSGK. Low complexity predominate over residues 938 to 951; that stretch reads AAQAGASASFSSSA. Basic and acidic residues predominate over residues 988-1007; the sequence is GPDRRGGFRRVPRGDCHTPR.

It belongs to the herpesviridae ICP4 family. A long stretch of serine residues may be a major site of phosphorylation.

The protein localises to the host nucleus. Functionally, this IE protein is a multifunctional protein capable of migrating to the nucleus, binding to DNA, trans-activating other viral genes, and autoregulating its own synthesis. This chain is Major viral transcription factor ICP4 homolog (IE), found in Equus caballus (Horse).